A 443-amino-acid chain; its full sequence is Thymidine phosphorylase (443 aa).

The protein belongs to the thymidine/pyrimidine-nucleoside phosphorylase family. As to quaternary structure, homodimer.

It carries out the reaction thymidine + phosphate = 2-deoxy-alpha-D-ribose 1-phosphate + thymine. Its pathway is pyrimidine metabolism; dTMP biosynthesis via salvage pathway; dTMP from thymine: step 1/2. The enzymes which catalyze the reversible phosphorolysis of pyrimidine nucleosides are involved in the degradation of these compounds and in their utilization as carbon and energy sources, or in the rescue of pyrimidine bases for nucleotide synthesis. The chain is Thymidine phosphorylase from Shewanella amazonensis (strain ATCC BAA-1098 / SB2B).